Consider the following 114-residue polypeptide: uncharacterized protein (114 aa).

This sequence to E.coli YfiI and P.aeruginosa RluD.

This is an uncharacterized protein from Escherichia coli O6:H1 (strain CFT073 / ATCC 700928 / UPEC).